A 105-amino-acid chain; its full sequence is N(4)-acetylcytidine amidohydrolase (105 aa).

One can recognise an ASCH domain in the interval 7 to 93 (TFFERFEHDI…VIAEIYPGLE (87 aa)). The active-site Proton acceptor is the Lys-21. Catalysis depends on Thr-24, which acts as the Nucleophile. Residue Glu-74 is the Proton donor of the active site.

This sequence belongs to the N(4)-acetylcytidine amidohydrolase family.

It catalyses the reaction N(4)-acetylcytidine + H2O = cytidine + acetate + H(+). The enzyme catalyses N(4)-acetyl-2'-deoxycytidine + H2O = 2'-deoxycytidine + acetate + H(+). The catalysed reaction is N(4)-acetylcytosine + H2O = cytosine + acetate + H(+). Catalyzes the hydrolysis of N(4)-acetylcytidine (ac4C). The sequence is that of N(4)-acetylcytidine amidohydrolase from Shewanella baltica (strain OS185).